The sequence spans 251 residues: UPF0246 protein TM1040_2658 (251 aa).

The protein belongs to the UPF0246 family.

The polypeptide is UPF0246 protein TM1040_2658 (Ruegeria sp. (strain TM1040) (Silicibacter sp.)).